The primary structure comprises 299 residues: Probable alpha-L-glutamate ligase (299 aa).

Positions 104–287 (LQLLAREGIE…VSGKIIEFLE (184 aa)) constitute an ATP-grasp domain. Residues Lys141, 178–179 (EF), Asp187, and 211–213 (RSN) each bind ATP. Asp248, Glu260, and Asn262 together coordinate Mg(2+). Mn(2+)-binding residues include Asp248, Glu260, and Asn262.

This sequence belongs to the RimK family. Mg(2+) serves as cofactor. Mn(2+) is required as a cofactor.

This chain is Probable alpha-L-glutamate ligase, found in Trichodesmium erythraeum (strain IMS101).